The following is a 341-amino-acid chain: 4-hydroxythreonine-4-phosphate dehydrogenase (341 aa).

Thr126 is a binding site for substrate. 3 residues coordinate a divalent metal cation: His161, His206, and His272. Lys280, Asn289, and Arg298 together coordinate substrate.

This sequence belongs to the PdxA family. As to quaternary structure, homodimer. Requires a divalent metal cation as cofactor.

It localises to the cytoplasm. The enzyme catalyses 4-(phosphooxy)-L-threonine + NAD(+) = 3-amino-2-oxopropyl phosphate + CO2 + NADH. The protein operates within cofactor biosynthesis; pyridoxine 5'-phosphate biosynthesis; pyridoxine 5'-phosphate from D-erythrose 4-phosphate: step 4/5. In terms of biological role, catalyzes the NAD(P)-dependent oxidation of 4-(phosphooxy)-L-threonine (HTP) into 2-amino-3-oxo-4-(phosphooxy)butyric acid which spontaneously decarboxylates to form 3-amino-2-oxopropyl phosphate (AHAP). The protein is 4-hydroxythreonine-4-phosphate dehydrogenase of Thermosynechococcus vestitus (strain NIES-2133 / IAM M-273 / BP-1).